The chain runs to 616 residues: Dihydroxy-acid dehydratase (616 aa).

D81 contacts Mg(2+). C122 serves as a coordination point for [2Fe-2S] cluster. Mg(2+)-binding residues include D123 and K124. K124 is subject to N6-carboxylysine. C195 is a binding site for [2Fe-2S] cluster. Residue E491 coordinates Mg(2+). The active-site Proton acceptor is the S517.

Belongs to the IlvD/Edd family. As to quaternary structure, homodimer. The cofactor is [2Fe-2S] cluster. It depends on Mg(2+) as a cofactor.

It carries out the reaction (2R)-2,3-dihydroxy-3-methylbutanoate = 3-methyl-2-oxobutanoate + H2O. The enzyme catalyses (2R,3R)-2,3-dihydroxy-3-methylpentanoate = (S)-3-methyl-2-oxopentanoate + H2O. It participates in amino-acid biosynthesis; L-isoleucine biosynthesis; L-isoleucine from 2-oxobutanoate: step 3/4. The protein operates within amino-acid biosynthesis; L-valine biosynthesis; L-valine from pyruvate: step 3/4. Its function is as follows. Functions in the biosynthesis of branched-chain amino acids. Catalyzes the dehydration of (2R,3R)-2,3-dihydroxy-3-methylpentanoate (2,3-dihydroxy-3-methylvalerate) into 2-oxo-3-methylpentanoate (2-oxo-3-methylvalerate) and of (2R)-2,3-dihydroxy-3-methylbutanoate (2,3-dihydroxyisovalerate) into 2-oxo-3-methylbutanoate (2-oxoisovalerate), the penultimate precursor to L-isoleucine and L-valine, respectively. The chain is Dihydroxy-acid dehydratase from Escherichia coli O7:K1 (strain IAI39 / ExPEC).